Consider the following 400-residue polypeptide: Trans-enoyl reductase ucsL (400 aa).

50 to 53 (TDHK) contacts NADP(+). Residue 145–152 (SVHGSVAL) coordinates substrate. Residues 204 to 207 (STAC), 227 to 230 (SPRN), tyrosine 245, and 292 to 293 (LE) contribute to the NADP(+) site. 313-317 (GPVMF) provides a ligand contact to substrate. 389-390 (VS) lines the NADP(+) pocket.

It belongs to the zinc-containing alcohol dehydrogenase family. Monomer.

It functions in the pathway mycotoxin biosynthesis. Trans-enoyl reductase; part of the gene cluster that mediates the biosynthesis of UCS1025A, a member of the pyrrolizidinone family that acts as a strong telomerase inhibitor and displays potent antibacterial and antitumor properties. These compounds share a hemiaminal-containing pyrrolizidinone core fused with a gamma-lactone, giving a furopyrrolizidine that is connected to a decalin fragment. The polyketide synthase module (PKS) of the PKS-NRPS ucsA is responsible for the synthesis of the polyketide backbone via the condensation of an acetyl-CoA starter unit with 6 malonyl-CoA units. The downstream nonribosomal peptide synthetase (NRPS) module then amidates the carboxyl end of the polyketide with a 2S,3S-methylproline derived from L-isoleucine by the 2-oxoglutarate-dependent dioxygenase ucsF which converts L-isoleucine to (4S,5S)-4-methylpyrroline-5-carboxylate that is further converted to 2S,3S-methylproline by the pyrroline-5-carboxylate reductase ucsG. Reductive release of the completed aminoacyl polyketide from the assembly line can form the 3-pyrrolin-2-one structure via an intramolecular Knoevenagel reaction. Because ucsA lacks a designated enoylreductase (ER) domain, the required activity is provided the enoyl reductase ucsL. This keto acyclic precursor is the substrate of the Diels-Alderase ucsH, that catalyzes the Diels-Alder cycloaddition. Oxidation of the 3S-methyl group to a carboxylate by the cytochrome P450 monooxygenase ucsK allows an oxa-Michael cyclization that might involve the reductase/dehydrogenase ucsI and which furnishes the furopyrrolizidine. The oxidase ucsJ likely plays a critical role in stereoselective reduction of the C5-C6 double bond to afford the required R-configured carboxylate group. Further enolization and oxidation at C5 by an unidentified enzyme affords the last intermediate that can undergo oxa-Michael cyclization to yield UCS1025A. This is Trans-enoyl reductase ucsL from Acremonium sp.